The primary structure comprises 288 residues: Quinate/shikimate dehydrogenase (288 aa).

2 residues coordinate substrate: lysine 71 and aspartate 107. Residues 132 to 135 (AGGA), 155 to 158 (NRRD), lysine 205, 232 to 235 (CVYN), and glycine 255 contribute to the NAD(+) site.

The protein belongs to the shikimate dehydrogenase family. In terms of assembly, homodimer.

It catalyses the reaction L-quinate + NAD(+) = 3-dehydroquinate + NADH + H(+). The enzyme catalyses L-quinate + NADP(+) = 3-dehydroquinate + NADPH + H(+). It carries out the reaction shikimate + NADP(+) = 3-dehydroshikimate + NADPH + H(+). The catalysed reaction is shikimate + NAD(+) = 3-dehydroshikimate + NADH + H(+). The protein operates within metabolic intermediate biosynthesis; chorismate biosynthesis; chorismate from D-erythrose 4-phosphate and phosphoenolpyruvate: step 4/7. The actual biological function of YdiB remains unclear, nor is it known whether 3-dehydroshikimate or quinate represents the natural substrate. Catalyzes the reversible NAD-dependent reduction of both 3-dehydroshikimate (DHSA) and 3-dehydroquinate to yield shikimate (SA) and quinate, respectively. It can use both NAD or NADP for catalysis, however it has higher catalytic efficiency with NAD. In Escherichia coli O139:H28 (strain E24377A / ETEC), this protein is Quinate/shikimate dehydrogenase.